Reading from the N-terminus, the 571-residue chain is Proline--tRNA ligase (571 aa).

This sequence belongs to the class-II aminoacyl-tRNA synthetase family. ProS type 1 subfamily. In terms of assembly, homodimer.

It is found in the cytoplasm. It catalyses the reaction tRNA(Pro) + L-proline + ATP = L-prolyl-tRNA(Pro) + AMP + diphosphate. Catalyzes the attachment of proline to tRNA(Pro) in a two-step reaction: proline is first activated by ATP to form Pro-AMP and then transferred to the acceptor end of tRNA(Pro). As ProRS can inadvertently accommodate and process non-cognate amino acids such as alanine and cysteine, to avoid such errors it has two additional distinct editing activities against alanine. One activity is designated as 'pretransfer' editing and involves the tRNA(Pro)-independent hydrolysis of activated Ala-AMP. The other activity is designated 'posttransfer' editing and involves deacylation of mischarged Ala-tRNA(Pro). The misacylated Cys-tRNA(Pro) is not edited by ProRS. This is Proline--tRNA ligase from Proteus mirabilis (strain HI4320).